A 362-amino-acid polypeptide reads, in one-letter code: DNA replication and repair protein RecF (362 aa).

30 to 37 (GLNAQGKS) provides a ligand contact to ATP.

This sequence belongs to the RecF family.

The protein localises to the cytoplasm. Functionally, the RecF protein is involved in DNA metabolism; it is required for DNA replication and normal SOS inducibility. RecF binds preferentially to single-stranded, linear DNA. It also seems to bind ATP. The polypeptide is DNA replication and repair protein RecF (Thermoanaerobacter pseudethanolicus (strain ATCC 33223 / 39E) (Clostridium thermohydrosulfuricum)).